The primary structure comprises 1207 residues: DNA-directed RNA polymerase subunit beta' (1207 aa).

Zn(2+)-binding residues include C60, C62, C75, and C78. Mg(2+)-binding residues include D450, D452, and D454. Zn(2+)-binding residues include C819, C893, C900, and C903.

It belongs to the RNA polymerase beta' chain family. As to quaternary structure, the RNAP catalytic core consists of 2 alpha, 1 beta, 1 beta' and 1 omega subunit. When a sigma factor is associated with the core the holoenzyme is formed, which can initiate transcription. Mg(2+) serves as cofactor. Requires Zn(2+) as cofactor.

The enzyme catalyses RNA(n) + a ribonucleoside 5'-triphosphate = RNA(n+1) + diphosphate. DNA-dependent RNA polymerase catalyzes the transcription of DNA into RNA using the four ribonucleoside triphosphates as substrates. In Streptococcus pyogenes serotype M12 (strain MGAS2096), this protein is DNA-directed RNA polymerase subunit beta'.